Reading from the N-terminus, the 606-residue chain is Cryptochrome-1 (606 aa).

In terms of domain architecture, Photolyase/cryptochrome alpha/beta spans 3-132 (VNAVHWFRKG…EVIVRISHTL (130 aa)). Lysine 11 is covalently cross-linked (Glycyl lysine isopeptide (Lys-Gly) (interchain with G-Cter in ubiquitin)). An LIR 1 motif is present at residues 50 to 54 (NRWRF). Serine 71 is subject to Phosphoserine; by AMPK. The LIR 2 motif lies at 82 to 87 (DVFPRL). A Glycyl lysine isopeptide (Lys-Gly) (interchain with G-Cter in ubiquitin) cross-link involves residue lysine 107. The LIR 3 motif lies at 151 to 156 (KRFQTL). A Glycyl lysine isopeptide (Lys-Gly) (interchain with G-Cter in ubiquitin) cross-link involves residue lysine 159. Serine 247 is subject to Phosphoserine; by MAPK. Serine 252 serves as a coordination point for FAD. 2 consecutive short sequence motifs (LIR) follow at residues 255-260 (LRFGCL) and 271-276 (DLYKKV). Serine 280 carries the phosphoserine; by AMPK modification. Positions 285–290 (SLYGQL) match the LIR 6 motif. Glutamine 289 serves as a coordination point for FAD. Lysine 329 participates in a covalent cross-link: Glycyl lysine isopeptide (Lys-Gly) (interchain with G-Cter in ubiquitin). The LIR 7 signature appears at 335–339 (TGFPW). Position 355 (histidine 355) interacts with FAD. Residues 371–470 (WISWEEGMKV…LIGVNYPKPM (100 aa)) are required for inhibition of CLOCK-BMAL1-mediated transcription. The LIR 8 motif lies at 379–384 (KVFEEL). 387–389 (DAD) serves as a coordination point for FAD. 3 consecutive short sequence motifs (LIR) follow at residues 395 to 400 (GSWMWL), 411 to 416 (HCYCPV), and 430 to 435 (RRYLPV). Residues 471-493 (VNHAEASRLNIERMKQIYQQLSR) are interaction with TIMELESS. Residue lysine 485 forms a Glycyl lysine isopeptide (Lys-Gly) (interchain with G-Cter in ubiquitin) linkage. 2 short sequence motifs (LIR) span residues 486–491 (QIYQQL) and 492–497 (SRYRGL). A disordered region spans residues 559-606 (YAHGDSQQTHSLKQGRSSAGTGLSSGKRPSQEEDAQSVGPKVQRQSSN). Polar residues predominate over residues 563 to 586 (DSQQTHSLKQGRSSAGTGLSSGKR). Lysine 585 participates in a covalent cross-link: Glycyl lysine isopeptide (Lys-Gly) (interchain with G-Cter in ubiquitin). At serine 588 the chain carries Phosphoserine.

Belongs to the DNA photolyase class-1 family. In terms of assembly, component of the circadian core oscillator, which includes the CRY proteins, CLOCK or NPAS2, BMAL1 or BMAL2, CSNK1D and/or CSNK1E, TIMELESS, and the PER proteins. Interacts directly with TIMELESS. Interacts directly with PER1 and PER2; interaction with PER2 inhibits its ubiquitination and vice versa. Interacts with PER3. Interacts with FBXL21. Interacts with FBXL3. Interacts with PPP5C (via TPR repeats). Interacts with CLOCK-BMAL1 independently of PER2 and DNA. Interacts with HDAC1, HDAC2 and SIN3B. Interacts with nuclear receptors AR, NR1D1, NR3C1/GR, RORA and RORC; the interaction with at least NR3C1/GR is ligand dependent. Interacts with PRKDC. Interacts with the G protein subunit alpha GNAS; the interaction may block GPCR-mediated regulation of cAMP concentrations. Interacts with PRMT5. Interacts with EZH2. Interacts with MYBBP1A, DOCK7, HNRNPU, RPL7A, RPL8 and RPS3. Interacts with MAP1LC3B. Interacts with CLOCK. Interacts with BMAL1. Interacts weakly with HDAC3; this interaction is enhanced in the presence of FBXL3. Interacts with TRIM28, KCTD5 and DDB1. Interacts with DTL. Interacts with DDB1-CUL4A complex. Interacts with FOXO1. Interacts with PSMD2 in a KDM8-dependent manner. Interacts with KDM8 in a FBXL3-dependent manner. Interacts with PPARA. Interacts with PPARG in a ligand-dependent manner. Interacts with PPARD (via domain NR LBD) in a ligand-dependent manner. Interacts with NR1I2 (via domain NR LBD) in a ligand-dependent manner. Interacts with NR1I3, VDR and HNF4A. It depends on FAD as a cofactor. (6R)-5,10-methylene-5,6,7,8-tetrahydrofolate serves as cofactor. Post-translationally, phosphorylation on Ser-247 by MAPK is important for the inhibition of CLOCK-BMAL1-mediated transcriptional activity. Phosphorylation by CSNK1E requires interaction with PER1 or PER2. Phosphorylation at Ser-71 and Ser-280 by AMPK decreases protein stability. Phosphorylation at Ser-588 exhibits a robust circadian rhythm with a peak at CT8, increases protein stability, prevents SCF(FBXL3)-mediated degradation and is antagonized by interaction with PRKDC. In terms of processing, ubiquitinated by the SCF(FBXL3) and SCF(FBXL21) complexes, regulating the balance between degradation and stabilization. The SCF(FBXL3) complex is mainly nuclear and mediates ubiquitination and subsequent degradation of CRY1. In contrast, cytoplasmic SCF(FBXL21) complex-mediated ubiquitination leads to stabilize CRY1 and counteract the activity of the SCF(FBXL3) complex. The SCF(FBXL3) and SCF(FBXL21) complexes probably mediate ubiquitination at different Lys residues. Ubiquitination at Lys-11 and Lys-107 are specifically ubiquitinated by the SCF(FBXL21) complex but not by the SCF(FBXL3) complex. Ubiquitination may be inhibited by PER2. Deubiquitinated by USP7. Undergoes autophagy-mediated degradation in the liver in a time-dependent manner. Autophagic degradation of CRY1 (an inhibitor of gluconeogenesis) occurs during periods of reduced feeding allowing induction of gluconeogenesis and maintenance of blood glucose levels. Expressed in cones, amacrine cells, and retinal ganglion cells of the retina (at protein level). Expressed in all tissues examined including heart, brain, spleen, lung, liver, skeletal muscle, kidney and testis. Higher levels in brain, liver and testis. In the retina, highly expressed in the ganglion cell layer (GCL) and in the inner nuclear layer (INL). Evenly distributed in central and peripheral retina. In the brain, highly expressed in the suprachiasmatic nucleus (SCN). High levels in cerebral cortical layers particularly in the pyramidial cell layer of the hippocampus, the granular cell layer of the dentate gyrus (DG) and the pyramidal cell layer of the piriform cortex (PFC).

The protein resides in the cytoplasm. It is found in the nucleus. With respect to regulation, KL001 (N-[3-(9H-carbazol-9-yl)-2-hydroxypropyl]-N-(2-furanylmethyl)-methanesulfonamide) binds to CRY1 and stabilizes it by inhibiting FBXL3- and ubiquitin-dependent degradation of CRY1 resulting in lengthening of the circadian periods. KL001-mediated CRY1 stabilization can inhibit glucagon-induced gluconeogenesis in primary hepatocytes. Transcriptional repressor which forms a core component of the circadian clock. The circadian clock, an internal time-keeping system, regulates various physiological processes through the generation of approximately 24 hour circadian rhythms in gene expression, which are translated into rhythms in metabolism and behavior. It is derived from the Latin roots 'circa' (about) and 'diem' (day) and acts as an important regulator of a wide array of physiological functions including metabolism, sleep, body temperature, blood pressure, endocrine, immune, cardiovascular, and renal function. Consists of two major components: the central clock, residing in the suprachiasmatic nucleus (SCN) of the brain, and the peripheral clocks that are present in nearly every tissue and organ system. Both the central and peripheral clocks can be reset by environmental cues, also known as Zeitgebers (German for 'timegivers'). The predominant Zeitgeber for the central clock is light, which is sensed by retina and signals directly to the SCN. The central clock entrains the peripheral clocks through neuronal and hormonal signals, body temperature and feeding-related cues, aligning all clocks with the external light/dark cycle. Circadian rhythms allow an organism to achieve temporal homeostasis with its environment at the molecular level by regulating gene expression to create a peak of protein expression once every 24 hours to control when a particular physiological process is most active with respect to the solar day. Transcription and translation of core clock components (CLOCK, NPAS2, BMAL1, BMAL2, PER1, PER2, PER3, CRY1 and CRY2) plays a critical role in rhythm generation, whereas delays imposed by post-translational modifications (PTMs) are important for determining the period (tau) of the rhythms (tau refers to the period of a rhythm and is the length, in time, of one complete cycle). A diurnal rhythm is synchronized with the day/night cycle, while the ultradian and infradian rhythms have a period shorter and longer than 24 hours, respectively. Disruptions in the circadian rhythms contribute to the pathology of cardiovascular diseases, cancer, metabolic syndromes and aging. A transcription/translation feedback loop (TTFL) forms the core of the molecular circadian clock mechanism. Transcription factors, CLOCK or NPAS2 and BMAL1 or BMAL2, form the positive limb of the feedback loop, act in the form of a heterodimer and activate the transcription of core clock genes and clock-controlled genes (involved in key metabolic processes), harboring E-box elements (5'-CACGTG-3') within their promoters. The core clock genes: PER1/2/3 and CRY1/2 which are transcriptional repressors form the negative limb of the feedback loop and interact with the CLOCK|NPAS2-BMAL1|BMAL2 heterodimer inhibiting its activity and thereby negatively regulating their own expression. This heterodimer also activates nuclear receptors NR1D1/2 and RORA/B/G, which form a second feedback loop and which activate and repress BMAL1 transcription, respectively. CRY1 and CRY2 have redundant functions but also differential and selective contributions at least in defining the pace of the SCN circadian clock and its circadian transcriptional outputs. More potent transcriptional repressor in cerebellum and liver than CRY2, though more effective in lengthening the period of the SCN oscillator. On its side, CRY2 seems to play a critical role in tuning SCN circadian period by opposing the action of CRY1. With CRY2, is dispensable for circadian rhythm generation but necessary for the development of intercellular networks for rhythm synchrony. Capable of translocating circadian clock core proteins such as PER proteins to the nucleus. Interacts with CLOCK-BMAL1 independently of PER proteins and is found at CLOCK-BMAL1-bound sites, suggesting that CRY may act as a molecular gatekeeper to maintain CLOCK-BMAL1 in a poised and repressed state until the proper time for transcriptional activation. Represses the CLOCK-BMAL1 induced transcription of BHLHE40/DEC1, ATF4, MTA1, KLF10 and NAMPT. May repress circadian target genes expression in collaboration with HDAC1 and HDAC2 through histone deacetylation. Mediates the clock-control activation of ATR and modulates ATR-mediated DNA damage checkpoint. In liver, mediates circadian regulation of cAMP signaling and gluconeogenesis by binding to membrane-coupled G proteins and blocking glucagon-mediated increases in intracellular cAMP concentrations and CREB1 phosphorylation. Inhibits hepatic gluconeogenesis by decreasing nuclear FOXO1 levels that down-regulates gluconeogenic gene expression. Besides its role in the maintenance of the circadian clock, is also involved in the regulation of other processes. Represses glucocorticoid receptor NR3C1/GR-induced transcriptional activity by binding to glucocorticoid response elements (GREs). Plays a key role in glucose and lipid metabolism modulation, in part, through the transcriptional regulation of genes involved in these pathways, such as LEP or ACSL4. Represses PPARD and its target genes in the skeletal muscle and limits exercise capacity. Plays an essential role in the generation of circadian rhythms in the retina. Represses the transcriptional activity of NR1I2. In Mus musculus (Mouse), this protein is Cryptochrome-1 (Cry1).